A 545-amino-acid polypeptide reads, in one-letter code: Chaperonin GroEL 2 (545 aa).

ATP contacts are provided by residues 29–32, 86–90, glycine 413, 479–481, and aspartate 495; these read TLGP, DGTTT, and NAA.

Belongs to the chaperonin (HSP60) family. Forms a cylinder of 14 subunits composed of two heptameric rings stacked back-to-back. Interacts with the co-chaperonin GroES.

It localises to the cytoplasm. It carries out the reaction ATP + H2O + a folded polypeptide = ADP + phosphate + an unfolded polypeptide.. Its function is as follows. Together with its co-chaperonin GroES, plays an essential role in assisting protein folding. The GroEL-GroES system forms a nano-cage that allows encapsulation of the non-native substrate proteins and provides a physical environment optimized to promote and accelerate protein folding. The polypeptide is Chaperonin GroEL 2 (Prochlorococcus marinus (strain SARG / CCMP1375 / SS120)).